The sequence spans 414 residues: Esterase FrsA (414 aa).

This sequence belongs to the FrsA family.

It catalyses the reaction a carboxylic ester + H2O = an alcohol + a carboxylate + H(+). Functionally, catalyzes the hydrolysis of esters. The sequence is that of Esterase FrsA from Escherichia coli O127:H6 (strain E2348/69 / EPEC).